An 817-amino-acid polypeptide reads, in one-letter code: Transcription factor SPT20 homolog-like 2 (817 aa).

Positions 1-14 (MDRDLEQALDRTEN) are enriched in basic and acidic residues. 5 disordered regions span residues 1–28 (MDRDLEQALDRTENITEIAQQRRPRRRY), 249–275 (PQQEQSDCPPPPELRVSTSGQKEERKV), 369–553 (PRKK…AAGR), 598–630 (PGSGAPAPAGISGSGLQSSGGPLPDARPGAVQA), and 675–697 (QLQQPTAAHPPQPGPQGSTLGLS). A compositionally biased stretch (polar residues) spans 423 to 440 (SHSSSGPASVSQLSSWKT). Composition is skewed to low complexity over residues 469–479 (SSSGKISSGNS), 494–505 (PAAAPAVAAAAP), 513–531 (AAPALAAAAVAAAAGGAAP), and 598–618 (PGSGAPAPAGISGSGLQSSGG).

This sequence belongs to the SPT20 family.

This is Transcription factor SPT20 homolog-like 2 (SUPT20HL2) from Homo sapiens (Human).